The primary structure comprises 251 residues: Probable transcriptional regulatory protein Franean1_5147 (251 aa).

This sequence belongs to the TACO1 family.

It localises to the cytoplasm. In Parafrankia sp. (strain EAN1pec), this protein is Probable transcriptional regulatory protein Franean1_5147.